The following is a 332-amino-acid chain: Fructose-1,6-bisphosphatase class 1 (332 aa).

Positions 94, 116, 118, and 119 each coordinate Mg(2+). Substrate is bound by residues 119–122, Asn-211, Tyr-239, 257–259, and Lys-269; these read DGSS and YLY. A Mg(2+)-binding site is contributed by Glu-275.

This sequence belongs to the FBPase class 1 family. As to quaternary structure, homotetramer. The cofactor is Mg(2+).

Its subcellular location is the cytoplasm. It carries out the reaction beta-D-fructose 1,6-bisphosphate + H2O = beta-D-fructose 6-phosphate + phosphate. It functions in the pathway carbohydrate biosynthesis; Calvin cycle. The sequence is that of Fructose-1,6-bisphosphatase class 1 from Synechococcus sp. (strain JA-2-3B'a(2-13)) (Cyanobacteria bacterium Yellowstone B-Prime).